Here is a 195-residue protein sequence, read N- to C-terminus: NAD(P)H-quinone oxidoreductase subunit J, chloroplastic (195 aa).

The protein belongs to the complex I 30 kDa subunit family. NDH is composed of at least 16 different subunits, 5 of which are encoded in the nucleus.

It is found in the plastid. It localises to the chloroplast thylakoid membrane. The catalysed reaction is a plastoquinone + NADH + (n+1) H(+)(in) = a plastoquinol + NAD(+) + n H(+)(out). The enzyme catalyses a plastoquinone + NADPH + (n+1) H(+)(in) = a plastoquinol + NADP(+) + n H(+)(out). NDH shuttles electrons from NAD(P)H:plastoquinone, via FMN and iron-sulfur (Fe-S) centers, to quinones in the photosynthetic chain and possibly in a chloroplast respiratory chain. The immediate electron acceptor for the enzyme in this species is believed to be plastoquinone. Couples the redox reaction to proton translocation, and thus conserves the redox energy in a proton gradient. The protein is NAD(P)H-quinone oxidoreductase subunit J, chloroplastic of Chlorokybus atmophyticus (Soil alga).